The following is a 210-amino-acid chain: Vacuolar protein sorting-associated protein 28 homolog (210 aa).

Residues 1 to 106 enclose the VPS28 N-terminal domain; that stretch reads MSSQNANLMR…REGRPITVKD (106 aa). In terms of domain architecture, VPS28 C-terminal spans 110-206; that stretch reads NVLKHIASIV…AYQAFNKALN (97 aa).

This sequence belongs to the VPS28 family. As to quaternary structure, component of the ESCRT-I complex (endosomal sorting complex required for transport I). As to expression, expressed in embryos.

Its subcellular location is the endosome. Its function is as follows. Component of the ESCRT-I complex, a regulator of vesicular trafficking process. The polypeptide is Vacuolar protein sorting-associated protein 28 homolog (vps-28) (Caenorhabditis elegans).